The sequence spans 88 residues: Cell division topological specificity factor (88 aa).

The protein belongs to the MinE family.

Prevents the cell division inhibition by proteins MinC and MinD at internal division sites while permitting inhibition at polar sites. This ensures cell division at the proper site by restricting the formation of a division septum at the midpoint of the long axis of the cell. The chain is Cell division topological specificity factor from Acidovorax ebreus (strain TPSY) (Diaphorobacter sp. (strain TPSY)).